Reading from the N-terminus, the 104-residue chain is Phosphocarrier protein HPr (104 aa).

The HPr domain maps to 17-104 (ELSAIFMIRN…EVFNSGFGEL (88 aa)). Histidine 31 functions as the Pros-phosphohistidine intermediate in the catalytic mechanism.

This sequence belongs to the HPr family.

The protein resides in the cytoplasm. Functionally, general (non sugar-specific) component of the phosphoenolpyruvate-dependent sugar phosphotransferase system (sugar PTS). This major carbohydrate active-transport system catalyzes the phosphorylation of incoming sugar substrates concomitantly with their translocation across the cell membrane. The phosphoryl group from phosphoenolpyruvate (PEP) is transferred to the phosphoryl carrier protein HPr by enzyme I. Phospho-HPr then transfers it to the PTS EIIA domain. In Chlamydia muridarum (strain MoPn / Nigg), this protein is Phosphocarrier protein HPr (ptsH).